A 214-amino-acid polypeptide reads, in one-letter code: Small ribosomal subunit protein uS4c (214 aa).

2 stretches are compositionally biased toward basic residues: residues 1-14 and 36-46; these read MSRY…KIKR and LSRPKPKKKSQ. The disordered stretch occupies residues 1–46; sequence MSRYRGPRVKKIKRLGSLPGLTTKKPPIVVRDPRKLSRPKPKKKSQ. In terms of domain architecture, S4 RNA-binding spans 92-153; the sequence is MRLDNTLFRL…KEKSKALIQN (62 aa).

It belongs to the universal ribosomal protein uS4 family. Part of the 30S ribosomal subunit. Contacts protein S5. The interaction surface between S4 and S5 is involved in control of translational fidelity.

The protein localises to the plastid. Its subcellular location is the chloroplast. Functionally, one of the primary rRNA binding proteins, it binds directly to 16S rRNA where it nucleates assembly of the body of the 30S subunit. With S5 and S12 plays an important role in translational accuracy. The polypeptide is Small ribosomal subunit protein uS4c (rps4) (Pelargonium hortorum (Common geranium)).